A 436-amino-acid polypeptide reads, in one-letter code: tRNA(Ile)-lysidine synthase (436 aa).

27 to 32 (SGGVDS) contributes to the ATP binding site.

The protein belongs to the tRNA(Ile)-lysidine synthase family.

Its subcellular location is the cytoplasm. The enzyme catalyses cytidine(34) in tRNA(Ile2) + L-lysine + ATP = lysidine(34) in tRNA(Ile2) + AMP + diphosphate + H(+). Functionally, ligates lysine onto the cytidine present at position 34 of the AUA codon-specific tRNA(Ile) that contains the anticodon CAU, in an ATP-dependent manner. Cytidine is converted to lysidine, thus changing the amino acid specificity of the tRNA from methionine to isoleucine. The polypeptide is tRNA(Ile)-lysidine synthase (Vibrio vulnificus (strain CMCP6)).